The sequence spans 531 residues: Inactive beta-amylase 4, chloroplastic (531 aa).

A chloroplast-targeting transit peptide spans 1-62 (MTETGVIGCG…KRGRFITKLR (62 aa)).

This sequence belongs to the glycosyl hydrolase 14 family. In terms of tissue distribution, preferentially expressed in vascular tissue of cotyledons, leaves, petioles, stems, petals, siliques and roots, particularly in phloem. Also present in root tip.

It is found in the plastid. The protein localises to the chloroplast. Its function is as follows. No alpha-1,4-glucan hydrolase activity, including beta-amylase, alpha-amylase, a-glucosidase or alpha-amyloglucosidase. However, facilitates or regulates starch breakdown, especially at night, by a mechanism involving direct interaction with starch or other alpha-1,4-glucan. The sequence is that of Inactive beta-amylase 4, chloroplastic (BAM4) from Arabidopsis thaliana (Mouse-ear cress).